The primary structure comprises 476 residues: Bifunctional protein HldE (476 aa).

Positions 1 to 320 are ribokinase; that stretch reads MQNPHIPSFA…RAVHQEGGSG (320 aa). 196-199 is a binding site for ATP; it reads NLSE. Aspartate 265 is a catalytic residue. The interval 345 to 476 is cytidylyltransferase; sequence FTNGCFDIIH…KIVERIREKD (132 aa).

The protein in the N-terminal section; belongs to the carbohydrate kinase PfkB family. It in the C-terminal section; belongs to the cytidylyltransferase family. As to quaternary structure, homodimer.

It carries out the reaction D-glycero-beta-D-manno-heptose 7-phosphate + ATP = D-glycero-beta-D-manno-heptose 1,7-bisphosphate + ADP + H(+). The enzyme catalyses D-glycero-beta-D-manno-heptose 1-phosphate + ATP + H(+) = ADP-D-glycero-beta-D-manno-heptose + diphosphate. It participates in nucleotide-sugar biosynthesis; ADP-L-glycero-beta-D-manno-heptose biosynthesis; ADP-L-glycero-beta-D-manno-heptose from D-glycero-beta-D-manno-heptose 7-phosphate: step 1/4. It functions in the pathway nucleotide-sugar biosynthesis; ADP-L-glycero-beta-D-manno-heptose biosynthesis; ADP-L-glycero-beta-D-manno-heptose from D-glycero-beta-D-manno-heptose 7-phosphate: step 3/4. Its function is as follows. Catalyzes the phosphorylation of D-glycero-D-manno-heptose 7-phosphate at the C-1 position to selectively form D-glycero-beta-D-manno-heptose-1,7-bisphosphate. In terms of biological role, catalyzes the ADP transfer from ATP to D-glycero-beta-D-manno-heptose 1-phosphate, yielding ADP-D-glycero-beta-D-manno-heptose. This chain is Bifunctional protein HldE, found in Alcanivorax borkumensis (strain ATCC 700651 / DSM 11573 / NCIMB 13689 / SK2).